An 838-amino-acid chain; its full sequence is Protein translocase subunit SecA 1 (838 aa).

Residues Gln85, 103 to 107, and Asp493 each bind ATP; that span reads GEGKT. The Zn(2+) site is built by Cys823, Cys825, Cys834, and His835.

The protein belongs to the SecA family. Monomer and homodimer. Part of the essential Sec protein translocation apparatus which comprises SecA, SecYEG and auxiliary proteins SecDF. Other proteins may also be involved. The cofactor is Zn(2+).

The protein resides in the cell membrane. It is found in the cytoplasm. It carries out the reaction ATP + H2O + cellular proteinSide 1 = ADP + phosphate + cellular proteinSide 2.. Part of the Sec protein translocase complex. Interacts with the SecYEG preprotein conducting channel. Has a central role in coupling the hydrolysis of ATP to the transfer of proteins into and across the cell membrane, serving as an ATP-driven molecular motor driving the stepwise translocation of polypeptide chains across the membrane. The protein is Protein translocase subunit SecA 1 of Streptococcus gordonii.